We begin with the raw amino-acid sequence, 1536 residues long: Ferredoxin-dependent glutamate synthase (1536 aa).

Cysteine 27 functions as the For GATase activity in the catalytic mechanism. Residues 27-427 (CGVGFIANLN…PGQMLCVDLS (401 aa)) form the Glutamine amidotransferase type-2 domain. 1105–1162 (LAEVHTTLVENSLREKVILRVDGGLRTGKDIIIAALMGAEEFGFGTVAMIATGCVMAR) is an FMN binding site. [3Fe-4S] cluster-binding residues include cysteine 1158, cysteine 1164, and cysteine 1169.

It belongs to the glutamate synthase family. Monomer. [3Fe-4S] cluster serves as cofactor. The cofactor is FAD. It depends on FMN as a cofactor.

It localises to the plastid. The protein resides in the chloroplast stroma. The enzyme catalyses 2 oxidized [2Fe-2S]-[ferredoxin] + 2 L-glutamate = L-glutamine + 2 reduced [2Fe-2S]-[ferredoxin] + 2-oxoglutarate + 2 H(+). The protein operates within amino-acid biosynthesis; L-glutamate biosynthesis via GLT pathway; L-glutamate from 2-oxoglutarate and L-glutamine (ferredoxin route): step 1/1. It participates in energy metabolism; nitrogen metabolism. This Antithamnion sp. (Red alga) protein is Ferredoxin-dependent glutamate synthase (gltB).